The primary structure comprises 253 residues: Small ribosomal subunit protein uS2 (253 aa).

It belongs to the universal ribosomal protein uS2 family.

The sequence is that of Small ribosomal subunit protein uS2 from Parvibaculum lavamentivorans (strain DS-1 / DSM 13023 / NCIMB 13966).